The chain runs to 132 residues: Large ribosomal subunit protein bL17 (132 aa).

The protein belongs to the bacterial ribosomal protein bL17 family. In terms of assembly, part of the 50S ribosomal subunit. Contacts protein L32.

This is Large ribosomal subunit protein bL17 from Shewanella woodyi (strain ATCC 51908 / MS32).